The chain runs to 59 residues: UPF0434 protein Noc_2677 (59 aa).

It belongs to the UPF0434 family.

The chain is UPF0434 protein Noc_2677 from Nitrosococcus oceani (strain ATCC 19707 / BCRC 17464 / JCM 30415 / NCIMB 11848 / C-107).